A 501-amino-acid polypeptide reads, in one-letter code: Lysine--tRNA ligase (501 aa).

Residues glutamate 410 and glutamate 417 each coordinate Mg(2+).

Belongs to the class-II aminoacyl-tRNA synthetase family. Homodimer. Requires Mg(2+) as cofactor.

The protein resides in the cytoplasm. It carries out the reaction tRNA(Lys) + L-lysine + ATP = L-lysyl-tRNA(Lys) + AMP + diphosphate. The protein is Lysine--tRNA ligase of Shewanella halifaxensis (strain HAW-EB4).